The primary structure comprises 402 residues: CCA-adding enzyme (402 aa).

ATP contacts are provided by G32 and R35. Residues G32 and R35 each coordinate CTP. D45 and D47 together coordinate Mg(2+). 5 residues coordinate ATP: R116, D159, R162, R165, and R168. Positions 116, 159, 162, 165, and 168 each coordinate CTP.

Belongs to the tRNA nucleotidyltransferase/poly(A) polymerase family. Bacterial CCA-adding enzyme type 3 subfamily. In terms of assembly, homodimer. It depends on Mg(2+) as a cofactor.

It catalyses the reaction a tRNA precursor + 2 CTP + ATP = a tRNA with a 3' CCA end + 3 diphosphate. The enzyme catalyses a tRNA with a 3' CCA end + 2 CTP + ATP = a tRNA with a 3' CCACCA end + 3 diphosphate. Catalyzes the addition and repair of the essential 3'-terminal CCA sequence in tRNAs without using a nucleic acid template. Adds these three nucleotides in the order of C, C, and A to the tRNA nucleotide-73, using CTP and ATP as substrates and producing inorganic pyrophosphate. tRNA 3'-terminal CCA addition is required both for tRNA processing and repair. Also involved in tRNA surveillance by mediating tandem CCA addition to generate a CCACCA at the 3' terminus of unstable tRNAs. While stable tRNAs receive only 3'-terminal CCA, unstable tRNAs are marked with CCACCA and rapidly degraded. The sequence is that of CCA-adding enzyme from Streptococcus pyogenes serotype M2 (strain MGAS10270).